The primary structure comprises 246 residues: Probable phosphatase Tola_0828 (246 aa).

Zn(2+) is bound by residues histidine 8, histidine 10, histidine 16, histidine 41, glutamate 74, histidine 102, histidine 132, aspartate 193, and histidine 195.

Belongs to the PHP family. Zn(2+) serves as cofactor.

The sequence is that of Probable phosphatase Tola_0828 from Tolumonas auensis (strain DSM 9187 / NBRC 110442 / TA 4).